Consider the following 67-residue polypeptide: Large ribosomal subunit protein uL29 (67 aa).

Belongs to the universal ribosomal protein uL29 family.

In Rhizorhabdus wittichii (strain DSM 6014 / CCUG 31198 / JCM 15750 / NBRC 105917 / EY 4224 / RW1) (Sphingomonas wittichii), this protein is Large ribosomal subunit protein uL29.